Consider the following 152-residue polypeptide: Transcriptional repressor NrdR (152 aa).

The segment at 3–34 is a zinc-finger region; that stretch reads CPFCNHGELKVIDSRNAPEANAIKRRRECLKC. The 91-residue stretch at 48 to 138 folds into the ATP-cone domain; it reads LQVLKRDGRY…VYRRFKDVGE (91 aa).

This sequence belongs to the NrdR family. The cofactor is Zn(2+).

Negatively regulates transcription of bacterial ribonucleotide reductase nrd genes and operons by binding to NrdR-boxes. This is Transcriptional repressor NrdR from Chlamydia pneumoniae (Chlamydophila pneumoniae).